The primary structure comprises 171 residues: Orotate phosphoribosyltransferase (171 aa).

5-phospho-alpha-D-ribose 1-diphosphate is bound by residues Arg85, Lys86, Arg88, His90, and 110–118; that span reads EDVVTTGNS. The orotate site is built by Thr114 and Arg142.

Belongs to the purine/pyrimidine phosphoribosyltransferase family. PyrE subfamily. As to quaternary structure, homodimer. Requires Mg(2+) as cofactor.

The enzyme catalyses orotidine 5'-phosphate + diphosphate = orotate + 5-phospho-alpha-D-ribose 1-diphosphate. It participates in pyrimidine metabolism; UMP biosynthesis via de novo pathway; UMP from orotate: step 1/2. Functionally, catalyzes the transfer of a ribosyl phosphate group from 5-phosphoribose 1-diphosphate to orotate, leading to the formation of orotidine monophosphate (OMP). The polypeptide is Orotate phosphoribosyltransferase (Thermoplasma acidophilum (strain ATCC 25905 / DSM 1728 / JCM 9062 / NBRC 15155 / AMRC-C165)).